Consider the following 298-residue polypeptide: Small ribosomal subunit protein uS3m (298 aa).

Belongs to the universal ribosomal protein uS3 family.

Its subcellular location is the mitochondrion. This is Small ribosomal subunit protein uS3m (RPS3) from Acanthamoeba castellanii (Amoeba).